Consider the following 382-residue polypeptide: S-adenosylmethionine decarboxylase proenzyme (382 aa).

Residue Phe-32 participates in substrate binding. Residues Glu-33 and Glu-36 contribute to the active site. Leu-87 serves as a coordination point for substrate. Ser-90 serves as the catalytic Schiff-base intermediate with substrate; via pyruvic acid. A Pyruvic acid (Ser); by autocatalysis modification is found at Ser-90. Catalysis depends on Cys-104, which acts as the Proton donor; for catalytic activity. Phe-248 lines the substrate pocket. Active-site proton acceptor; for processing activity residues include Ser-254 and His-267. A substrate-binding site is contributed by Glu-271.

The protein belongs to the eukaryotic AdoMetDC family. Heterotetramer of two alpha and two beta chains. It depends on pyruvate as a cofactor. Is synthesized initially as an inactive proenzyme. Formation of the active enzyme involves a self-maturation process in which the active site pyruvoyl group is generated from an internal serine residue via an autocatalytic post-translational modification. Two non-identical subunits are generated from the proenzyme in this reaction, and the pyruvate is formed at the N-terminus of the alpha chain, which is derived from the carboxyl end of the proenzyme. The post-translation cleavage follows an unusual pathway, termed non-hydrolytic serinolysis, in which the side chain hydroxyl group of the serine supplies its oxygen atom to form the C-terminus of the beta chain, while the remainder of the serine residue undergoes an oxidative deamination to produce ammonia and the pyruvoyl group blocking the N-terminus of the alpha chain.

It carries out the reaction S-adenosyl-L-methionine + H(+) = S-adenosyl 3-(methylsulfanyl)propylamine + CO2. It participates in amine and polyamine biosynthesis; S-adenosylmethioninamine biosynthesis; S-adenosylmethioninamine from S-adenosyl-L-methionine: step 1/1. The chain is S-adenosylmethionine decarboxylase proenzyme from Leishmania donovani.